Here is a 607-residue protein sequence, read N- to C-terminus: Glutamyl-tRNA(Gln) amidotransferase subunit E (607 aa).

Belongs to the GatB/GatE family. GatE subfamily. Heterodimer of GatD and GatE.

The enzyme catalyses L-glutamyl-tRNA(Gln) + L-glutamine + ATP + H2O = L-glutaminyl-tRNA(Gln) + L-glutamate + ADP + phosphate + H(+). Its function is as follows. Allows the formation of correctly charged Gln-tRNA(Gln) through the transamidation of misacylated Glu-tRNA(Gln) in organisms which lack glutaminyl-tRNA synthetase. The reaction takes place in the presence of glutamine and ATP through an activated gamma-phospho-Glu-tRNA(Gln). The GatDE system is specific for glutamate and does not act on aspartate. This is Glutamyl-tRNA(Gln) amidotransferase subunit E from Pyrobaculum islandicum (strain DSM 4184 / JCM 9189 / GEO3).